We begin with the raw amino-acid sequence, 389 residues long: Acetylornithine aminotransferase (389 aa).

Pyridoxal 5'-phosphate is bound by residues 104-105 and F131; that span reads GT. Residue R134 participates in N(2)-acetyl-L-ornithine binding. 216–219 lines the pyridoxal 5'-phosphate pocket; it reads DEVQ. Residue K245 is modified to N6-(pyridoxal phosphate)lysine. S273 is a binding site for N(2)-acetyl-L-ornithine. T274 contacts pyridoxal 5'-phosphate.

Belongs to the class-III pyridoxal-phosphate-dependent aminotransferase family. ArgD subfamily. As to quaternary structure, homodimer. Pyridoxal 5'-phosphate is required as a cofactor.

It localises to the cytoplasm. It carries out the reaction N(2)-acetyl-L-ornithine + 2-oxoglutarate = N-acetyl-L-glutamate 5-semialdehyde + L-glutamate. It functions in the pathway amino-acid biosynthesis; L-arginine biosynthesis; N(2)-acetyl-L-ornithine from L-glutamate: step 4/4. This Methanopyrus kandleri (strain AV19 / DSM 6324 / JCM 9639 / NBRC 100938) protein is Acetylornithine aminotransferase.